Consider the following 98-residue polypeptide: NADH-ubiquinone oxidoreductase chain 4L (98 aa).

Helical transmembrane passes span 1–21 (MTMVYANIFLAFTTSLMGLLM), 29–49 (SLLCLEGMMLSLFVMMTVTIL), and 61–81 (IILLVFAACEAALGLSLLVMV).

The protein belongs to the complex I subunit 4L family. Core subunit of respiratory chain NADH dehydrogenase (Complex I) which is composed of 45 different subunits.

The protein resides in the mitochondrion inner membrane. It catalyses the reaction a ubiquinone + NADH + 5 H(+)(in) = a ubiquinol + NAD(+) + 4 H(+)(out). Its function is as follows. Core subunit of the mitochondrial membrane respiratory chain NADH dehydrogenase (Complex I) which catalyzes electron transfer from NADH through the respiratory chain, using ubiquinone as an electron acceptor. Part of the enzyme membrane arm which is embedded in the lipid bilayer and involved in proton translocation. The chain is NADH-ubiquinone oxidoreductase chain 4L (MT-ND4L) from Neomonachus schauinslandi (Hawaiian monk seal).